A 212-amino-acid polypeptide reads, in one-letter code: Probable nicotinate-nucleotide adenylyltransferase (212 aa).

This sequence belongs to the NadD family.

The enzyme catalyses nicotinate beta-D-ribonucleotide + ATP + H(+) = deamido-NAD(+) + diphosphate. The protein operates within cofactor biosynthesis; NAD(+) biosynthesis; deamido-NAD(+) from nicotinate D-ribonucleotide: step 1/1. Catalyzes the reversible adenylation of nicotinate mononucleotide (NaMN) to nicotinic acid adenine dinucleotide (NaAD). This is Probable nicotinate-nucleotide adenylyltransferase from Shewanella sp. (strain ANA-3).